A 123-amino-acid chain; its full sequence is Protein Wnt-7 (123 aa).

Residue S1 is the site of O-palmitoleoyl serine; by PORCN attachment. N79 and N90 each carry an N-linked (GlcNAc...) asparagine glycan. C89 and C104 are joined by a disulfide.

The protein belongs to the Wnt family. Palmitoleoylation is required for efficient binding to frizzled receptors. Depalmitoleoylation leads to Wnt signaling pathway inhibition.

The protein localises to the secreted. The protein resides in the extracellular space. Its subcellular location is the extracellular matrix. Functionally, ligand for members of the frizzled family of seven transmembrane receptors. Probable developmental protein. May be a signaling molecule which affects the development of discrete regions of tissues. Is likely to signal over only few cell diameters. This chain is Protein Wnt-7 (WNT-7), found in Strongylocentrotus purpuratus (Purple sea urchin).